The chain runs to 653 residues: PAN2-PAN3 deadenylation complex subunit PAN3 (653 aa).

Disordered stretches follow at residues 1 to 21 and 45 to 128; these read MASD…ENAK and HDPN…AAPD. A C3H1-type zinc finger spans residues 19-48; that stretch reads NAKDTLCRNVTIYGRCRYEDKGCVYNHDPN. Low complexity predominate over residues 68–95; that stretch reads SFTPSLLSSNGSSPTSSSATLKKTTTIS. Polar residues predominate over residues 108 to 119; that stretch reads GISSRSNASTPS. Residues 256-516 are pseudokinase domain; the sequence is QTLPNTQLPA…TIDIFITGIS (261 aa). Residues arginine 308, 357-364, and 416-417 each bind ATP; these read DYHPLSKT and SK. The stretch at 517 to 555 forms a coiled coil; the sequence is SQLMSTFDSALHMDDQLTSDLSRELENGRLVRLMTKLNF. Residues 556–653 form a knob domain region; sequence INERPEYEHD…ALLKPTRRVH (98 aa).

Belongs to the protein kinase superfamily. PAN3 family. Homodimer. Forms a heterotrimer with a catalytic subunit pan2 to form the poly(A)-nuclease (PAN) deadenylation complex. Interacts (via PAM-2 motif) with poly(A)-binding protein pab1 (via PABC domain), conferring substrate specificity of the enzyme complex.

The protein resides in the cytoplasm. Functionally, regulatory subunit of the poly(A)-nuclease (PAN) deadenylation complex, one of two cytoplasmic mRNA deadenylases involved in mRNA turnover. PAN specifically shortens poly(A) tails of RNA and the activity is stimulated by poly(A)-binding protein pab1. PAN deadenylation is followed by rapid degradation of the shortened mRNA tails by the CCR4-NOT complex. Deadenylated mRNAs are then degraded by two alternative mechanisms, namely exosome-mediated 3'-5' exonucleolytic degradation, or deadenylation-dependent mRNA decaping and subsequent 5'-3' exonucleolytic degradation by xrn1. May also be involved in post-transcriptional maturation of mRNA poly(A) tails. pan3 acts as a positive regulator for PAN activity, recruiting the catalytic subunit pan2 to mRNA via its interaction with RNA and with pab1. This chain is PAN2-PAN3 deadenylation complex subunit PAN3, found in Aspergillus terreus (strain NIH 2624 / FGSC A1156).